We begin with the raw amino-acid sequence, 201 residues long: Small ribosomal subunit protein uS4 (201 aa).

The region spanning 91–151 (ARLDNVIYRA…DRSRSMLWFD (61 aa)) is the S4 RNA-binding domain.

Belongs to the universal ribosomal protein uS4 family. Part of the 30S ribosomal subunit. Contacts protein S5. The interaction surface between S4 and S5 is involved in control of translational fidelity.

Its function is as follows. One of the primary rRNA binding proteins, it binds directly to 16S rRNA where it nucleates assembly of the body of the 30S subunit. Functionally, with S5 and S12 plays an important role in translational accuracy. The chain is Small ribosomal subunit protein uS4 from Corynebacterium urealyticum (strain ATCC 43042 / DSM 7109).